Here is a 161-residue protein sequence, read N- to C-terminus: Peroxynitrite isomerase 2 (161 aa).

The short motif at 17 to 23 (GTWAGQG) is the GXWXGXG element. His152 serves as a coordination point for heme b.

It belongs to the nitrobindin family. As to quaternary structure, homodimer. The cofactor is heme b.

It carries out the reaction peroxynitrite = nitrate. Its pathway is nitrogen metabolism. In terms of biological role, heme-binding protein able to scavenge peroxynitrite and to protect free L-tyrosine against peroxynitrite-mediated nitration, by acting as a peroxynitrite isomerase that converts peroxynitrite to nitrate. Therefore, this protein likely plays a role in peroxynitrite sensing and in the detoxification of reactive nitrogen and oxygen species (RNS and ROS, respectively). Is able to bind nitric oxide (NO) in vitro, but may act as a sensor of peroxynitrite levels in vivo. This is Peroxynitrite isomerase 2 from Mycobacterium ulcerans (strain Agy99).